The primary structure comprises 910 residues: Staphylococcal nuclease domain-containing protein 1 (910 aa).

N-acetylalanine is present on Ala-2. TNase-like domains lie at Thr-18–Glu-166, Lys-193–Asp-328, and Lys-341–Lys-496. The residue at position 103 (Thr-103) is a Phosphothreonine. N6-acetyllysine is present on Lys-193. Thr-240 carries the post-translational modification Phosphothreonine. 2 consecutive short sequence motifs (nuclear localization signal) follow at residues Arg-321–Ile-325 and Lys-388–Pro-392. Ser-426 is modified (phosphoserine). Lys-513 participates in a covalent cross-link: Glycyl lysine isopeptide (Lys-Gly) (interchain with G-Cter in SUMO2). Positions Gly-525–His-660 constitute a TNase-like 4 domain. Residue Lys-641 is modified to N6-acetyllysine. Phosphoserine is present on Ser-645. The Tudor domain maps to Ala-729 to Arg-787. Phosphothreonine is present on Thr-779. 2 positions are modified to phosphoserine: Ser-785 and Ser-909.

As to quaternary structure, forms a ternary complex with STAT6 and POLR2A. Associates with the RNA-induced silencing complex (RISC). Interacts with the RISC components AGO2, FMR1 and TNRC6A. Interacts with GTF2E1 and GTF2E2. Interacts with PIM1. Interacts with STAT5. Interacts with SYT11 (via C2 2 domain); the interaction with SYT11 is direct. Phosphorylated by PIM1 in vitro. As to expression, in lactating cows highly expressed in mammary epithelial cells.

Its subcellular location is the cytoplasm. The protein resides in the nucleus. It localises to the melanosome. It carries out the reaction Endonucleolytic cleavage to nucleoside 3'-phosphates and 3'-phosphooligonucleotide end-products.. Its function is as follows. Endonuclease that mediates miRNA decay of both protein-free and AGO2-loaded miRNAs. As part of its function in miRNA decay, regulates mRNAs involved in G1-to-S phase transition. Functions as a bridging factor between STAT6 and the basal transcription factor. Plays a role in PIM1 regulation of MYB activity. Functions as a transcriptional coactivator for STAT5. In Bos taurus (Bovine), this protein is Staphylococcal nuclease domain-containing protein 1 (SND1).